The primary structure comprises 56 residues: uncharacterized protein (56 aa).

Residues 2-22 (ILYIIVAISILLNIILGIKVI) traverse the membrane as a helical segment.

The protein resides in the membrane. This is an uncharacterized protein from Methanocaldococcus jannaschii (strain ATCC 43067 / DSM 2661 / JAL-1 / JCM 10045 / NBRC 100440) (Methanococcus jannaschii).